Consider the following 135-residue polypeptide: Large ribosomal subunit protein bL17 (135 aa).

This sequence belongs to the bacterial ribosomal protein bL17 family. As to quaternary structure, part of the 50S ribosomal subunit. Contacts protein L32.

The chain is Large ribosomal subunit protein bL17 from Listeria welshimeri serovar 6b (strain ATCC 35897 / DSM 20650 / CCUG 15529 / CIP 8149 / NCTC 11857 / SLCC 5334 / V8).